Here is a 224-residue protein sequence, read N- to C-terminus: Thiamine-triphosphatase (224 aa).

The residue at position 2 (A2) is an N-acetylalanine. The region spanning 5–201 is the CYTH domain; the sequence is LIEVERKFAP…AKLMVYLQRF (197 aa). Residues E7 and E9 each coordinate Mg(2+). Substrate is bound by residues K11, R55, R57, K65, and R125. Residues D145, E157, and E159 each contribute to the Mg(2+) site. E157 lines the substrate pocket. Substrate is bound at residue K193.

It belongs to the ThTPase family. As to quaternary structure, monomer. The cofactor is Mg(2+).

It localises to the cytoplasm. It carries out the reaction thiamine triphosphate + H2O = thiamine diphosphate + phosphate + H(+). Its function is as follows. Hydrolase highly specific for thiamine triphosphate (ThTP). In Mus musculus (Mouse), this protein is Thiamine-triphosphatase (Thtpa).